The chain runs to 1400 residues: DNA-directed RNA polymerase subunit beta' (1400 aa).

4 residues coordinate Zn(2+): Cys71, Cys73, Cys86, and Cys89. Mg(2+) contacts are provided by Asp462, Asp464, and Asp466. The Zn(2+) site is built by Cys811, Cys885, Cys892, and Cys895.

It belongs to the RNA polymerase beta' chain family. In terms of assembly, the RNAP catalytic core consists of 2 alpha, 1 beta, 1 beta' and 1 omega subunit. When a sigma factor is associated with the core the holoenzyme is formed, which can initiate transcription. Requires Mg(2+) as cofactor. It depends on Zn(2+) as a cofactor.

It carries out the reaction RNA(n) + a ribonucleoside 5'-triphosphate = RNA(n+1) + diphosphate. Its function is as follows. DNA-dependent RNA polymerase catalyzes the transcription of DNA into RNA using the four ribonucleoside triphosphates as substrates. The polypeptide is DNA-directed RNA polymerase subunit beta' (Brucella suis biovar 1 (strain 1330)).